Consider the following 249-residue polypeptide: tRNA pseudouridine synthase A (249 aa).

Catalysis depends on Asp-53, which acts as the Nucleophile. Tyr-111 lines the substrate pocket.

It belongs to the tRNA pseudouridine synthase TruA family. As to quaternary structure, homodimer.

It carries out the reaction uridine(38/39/40) in tRNA = pseudouridine(38/39/40) in tRNA. In terms of biological role, formation of pseudouridine at positions 38, 39 and 40 in the anticodon stem and loop of transfer RNAs. In Streptococcus gordonii (strain Challis / ATCC 35105 / BCRC 15272 / CH1 / DL1 / V288), this protein is tRNA pseudouridine synthase A.